The sequence spans 562 residues: Sulfite reductase [NADPH] hemoprotein beta-component (562 aa).

The [4Fe-4S] cluster site is built by C426, C432, C471, and C475. C475 contributes to the siroheme binding site.

The protein belongs to the nitrite and sulfite reductase 4Fe-4S domain family. Alpha(8)-beta(8). The alpha component is a flavoprotein, the beta component is a hemoprotein. It depends on siroheme as a cofactor. [4Fe-4S] cluster is required as a cofactor.

The enzyme catalyses hydrogen sulfide + 3 NADP(+) + 3 H2O = sulfite + 3 NADPH + 4 H(+). It participates in sulfur metabolism; hydrogen sulfide biosynthesis; hydrogen sulfide from sulfite (NADPH route): step 1/1. Functionally, component of the sulfite reductase complex that catalyzes the 6-electron reduction of sulfite to sulfide. This is one of several activities required for the biosynthesis of L-cysteine from sulfate. This Shewanella denitrificans (strain OS217 / ATCC BAA-1090 / DSM 15013) protein is Sulfite reductase [NADPH] hemoprotein beta-component.